Reading from the N-terminus, the 152-residue chain is Protein X (152 aa).

Positions 68-115 are mitochondrial targeting sequence; sequence PCALRFTSATWRCMETPMNSVTCLRKRTLGLRTAPPTVMEQYIKDCLF.

It belongs to the orthohepadnavirus protein X family. In terms of assembly, may form homodimer. May interact with host CEBPA, CFLAR, CREB1, DDB1, E4F1, HBXIP, HSPD1/HSP60, NFKBIA, POLR2E and SMAD4. Interacts with host SMC5-SMC6 complex and induces its degradation. Interacts with host TRPC4AP; leading to prevent ubiquitination of TRPC4AP. Interacts with host PLSCR1; this interaction promotes ubiquitination and degradation of HBx and impairs HBx-mediated cell proliferation. In terms of processing, a fraction may be phosphorylated in insect cells and HepG2 cells, a human hepatoblastoma cell line. Phosphorylated in vitro by host protein kinase C or mitogen-activated protein kinase. N-acetylated in insect cells.

The protein localises to the host cytoplasm. Its subcellular location is the host nucleus. The protein resides in the host mitochondrion. Multifunctional protein that plays a role in silencing host antiviral defenses and promoting viral transcription. Does not seem to be essential for HBV infection. May be directly involved in development of cirrhosis and liver cancer (hepatocellular carcinoma). Most of cytosolic activities involve modulation of cytosolic calcium. The effect on apoptosis is controversial depending on the cell types in which the studies have been conducted. May induce apoptosis by localizing in mitochondria and causing loss of mitochondrial membrane potential. May also modulate apoptosis by binding host CFLAR, a key regulator of the death-inducing signaling complex (DISC). Promotes viral transcription by using the host E3 ubiquitin ligase DDB1 to target the SMC5-SMC6 complex to proteasomal degradation. This host complex would otherwise bind to viral episomal DNA, and prevents its transcription. Moderately stimulates transcription of many different viral and cellular transcription elements. Promoters and enhancers stimulated by HBx contain DNA binding sites for NF-kappa-B, AP-1, AP-2, c-EBP, ATF/CREB, or the calcium-activated factor NF-AT. This chain is Protein X, found in Lagothrix lagotricha (Brown woolly monkey).